The primary structure comprises 748 residues: Glucans biosynthesis glucosyltransferase H (748 aa).

7 consecutive transmembrane segments (helical) span residues 85 to 107 (LIVRRLFIFVGTALLTLAGGYGM), 127 to 149 (FLVLLAWVAFSFMSALAGFFVLL), 443 to 465 (GIGSYVTAPLWLLFLLVGLLISL), 494 to 516 (AWVFAATMGLLILPKLLAYLVLI), 529 to 551 (GRVLAGVVCEAFVAALLAPCMMI), 587 to 606 (LAGPTLCGLVLSVCAYSVSL), and 608 to 630 (LLLWMSPVVLGLLLSIPLGIMTS).

This sequence belongs to the glycosyltransferase 2 family. OpgH subfamily.

The protein resides in the cell inner membrane. It participates in glycan metabolism; osmoregulated periplasmic glucan (OPG) biosynthesis. Involved in the biosynthesis of osmoregulated periplasmic glucans (OPGs). This is Glucans biosynthesis glucosyltransferase H from Bradyrhizobium diazoefficiens (strain JCM 10833 / BCRC 13528 / IAM 13628 / NBRC 14792 / USDA 110).